The sequence spans 896 residues: Vacuolar zinc transporter TgZnT (896 aa).

Topologically, residues 1-472 (MPFSCFVFSQ…ETGTQRARRK (472 aa)) are cytoplasmic. Positions 82–91 (VLSSRGDESV) are enriched in basic and acidic residues. Disordered regions lie at residues 82–104 (VLSSRGDESVRSPQGRQVHSPGF), 205–227 (MKEIPSPRSRSPSDPDSSSRPCA), and 255–329 (SSSC…SSAS). 2 stretches are compositionally biased toward low complexity: residues 210 to 225 (SPRSRSPSDPDSSSRP) and 255 to 266 (SSSCCSRSNSSS). Residues 303-322 (VHERRAEATCCAPRDRHGGD) show a composition bias toward basic and acidic residues. The chain crosses the membrane as a helical span at residues 473 to 493 (LVMASMVCCVFMFVEIVAGVL). Over 494 to 502 (ANSLALMTD) the chain is Vacuolar. A helical membrane pass occupies residues 503–523 (ASHLLSDLCAFLISLFALWVS). The Cytoplasmic portion of the chain corresponds to 524 to 539 (ELKGNPSMSFGYHRAE). The chain crosses the membrane as a helical span at residues 540-560 (ILGALLSVFLIWVLTAVLIYA). Residues 561–573 (ACFRLVDPPQVDG) are Vacuolar-facing. A helical transmembrane segment spans residues 574-594 (ELMFWTALLGTLANLFMTHIL). At 595 to 737 (KVHSHGIGQV…YENMNLRAAY (143 aa)) the chain is on the cytoplasmic side. The disordered stretch occupies residues 621-707 (LQASSSSPEK…RPFSASSAGS (87 aa)). Over residues 656 to 680 (RDAEAGRDAEAGRDAEAGRDAETGR) the composition is skewed to basic and acidic residues. The helical transmembrane segment at 738 to 758 (IHALGDLLQNIGVMIASALIW) threads the bilayer. Residues 759–762 (WRPD) lie on the Vacuolar side of the membrane. Residues 763 to 783 (WAIADPICTFIFSIFVLFTTL) form a helical membrane-spanning segment. Residues 784 to 896 (SILKEALNVL…CSDPMKVFRR (113 aa)) are Cytoplasmic-facing.

This sequence belongs to the cation diffusion facilitator (CDF) transporter (TC 2.A.4) family. SLC30A subfamily.

It localises to the vacuole membrane. The protein localises to the cytoplasmic vesicle membrane. Its function is as follows. Vacuolar zinc transporter that is probably involved in the transfer of zinc ions from the cytosol to the vacuole for intracellular storage. Plays an essential role in extracellular zinc tolerance. The chain is Vacuolar zinc transporter TgZnT from Toxoplasma gondii (strain ATCC 50853 / GT1).